Consider the following 471-residue polypeptide: MSQEMGELTQTRLQKIWIPHNNGNSRLQRRRGSSIPQFTNSPTMVIMVGLPARGKTYISTKLTRYLNWIGTPTKVFNLGQYRREAVSYKNYEFFLPDNMEALLIRKQCALAALKDVHSYLSHEEGRVAVFDATNTTRERRSLILQFAKEHGYKVFFIESICNDPDVIAENIRQVKLGSPDYIDCDREKVLEDFLKRIECYEVNYQPLDDELDSHLSYIKIFDVGTRYMVNRVQDHIQSRTVYYLMNIHVTPRSIYLCRHGESELNLRGRIGGDSGLSARGKQYAYALANFIQSQGISSLKVGTSHMKRTIQTAEALGLPYEQWKALNEIDAGVCEEMTYEEIQEHYPEEFALRDQDKYRYRYPKGESYEDLVQRLEPVIMELERQENVLVICHQAVMRCLLAYFLDKSSDELPYLKCPLHTVLKLTPVAYGCKVESIYLNVEAVNTHREKPENVDITREPEEALDTVPAHY.

Position 2 is an N-acetylserine (Ser2). Residues 2-250 (SQEMGELTQT…VYYLMNIHVT (249 aa)) are 6-phosphofructo-2-kinase. At Ser33 the chain carries Phosphoserine; by PKA. An ATP-binding site is contributed by 49–57 (GLPARGKTY). The beta-D-fructose 6-phosphate site is built by Arg82 and Arg105. The active site involves Asp131. The beta-D-fructose 6-phosphate site is built by Thr133 and Arg139. Residue Ser141 is modified to Phosphoserine. Cys161 is a catalytic residue. 170 to 175 (NIRQVK) provides a ligand contact to ATP. Lys175, Arg196, and Tyr200 together coordinate beta-D-fructose 6-phosphate. Residues 251–471 (PRSIYLCRHG…EALDTVPAHY (221 aa)) form a fructose-2,6-bisphosphatase region. Residue Arg258 coordinates beta-D-fructose 2,6-bisphosphate. The active-site Tele-phosphohistidine intermediate is His259. 3 residues coordinate beta-D-fructose 2,6-bisphosphate: Asn265, Gly271, and Arg308. Residue Glu328 is the Proton donor/acceptor of the active site. Beta-D-fructose 2,6-bisphosphate is bound by residues Tyr339, Arg353, Lys357, Tyr368, Gln394, and Arg398. 350–353 (FALR) serves as a coordination point for ATP. ATP-binding positions include 394 to 398 (QAVMR) and Tyr430.

This sequence in the C-terminal section; belongs to the phosphoglycerate mutase family. Homodimer. Liver.

The catalysed reaction is beta-D-fructose 2,6-bisphosphate + H2O = beta-D-fructose 6-phosphate + phosphate. It carries out the reaction beta-D-fructose 6-phosphate + ATP = beta-D-fructose 2,6-bisphosphate + ADP + H(+). With respect to regulation, phosphorylation at Ser-33 inhibits the kinase and activates the bisphosphatase. Synthesis and degradation of fructose 2,6-bisphosphate. This chain is 6-phosphofructo-2-kinase/fructose-2,6-bisphosphatase 1, found in Bos taurus (Bovine).